Reading from the N-terminus, the 642-residue chain is Uromodulin (642 aa).

The signal sequence occupies residues 1–26; it reads MGQLSSLTSVWMVVVVTSWVIIAANI. One can recognise an EGF-like 1 domain in the interval 32-64; that stretch reads RSCSECHSNATCMEDGMVTTCSCLVGFTGSGFE. 21 disulfide bridges follow: C34–C43, C37–C52, C54–C65, C71–C85, C79–C94, C96–C108, C114–C128, C122–C137, C139–C150, C152–C163, C157–C172, C176–C269, C197–C284, C219–C257, C225–C289, C250–C258, C299–C308, C302–C317, C319–C348, C336–C426, and C367–C390. An N-linked (GlcNAc...) asparagine glycan is attached at N40. The 43-residue stretch at 67-109 folds into the EGF-like 2; calcium-binding domain; that stretch reads DLDECAIPGAHNCSEGSSCMNTLGSYLCTCPDGFRLTPGLGCI. Residue N78 is glycosylated (N-linked (GlcNAc...) asparagine). The EGF-like 3; calcium-binding domain maps to 110 to 151; that stretch reads DVDECSEPGLSRCHALATCINNKGNYSCVCPAGYRGDGQHCE. N-linked (GlcNAc...) asparagine glycosylation occurs at N134. The segment at 152 to 173 is beta hairpin; that stretch reads CSPGSCGPGLDCVPVGDALVCA. Positions 174 to 293 are D10C; that stretch reads DPCQEHRILD…CYLAYCTDPT (120 aa). 2 N-linked (GlcNAc...) asparagine glycosylation sites follow: N234 and N246. N277 carries an N-linked (GlcNAc...) asparagine glycan. The 32-residue stretch at 294 to 325 folds into the EGF-like 4 domain; it reads SVLGTCEECSVEEDCKSHDGMWSCQCKQDFNV. N-linked (GlcNAc...) asparagine glycosylation occurs at N324. A ZP-N region spans residues 335–430; the sequence is ECRPNDIKVS…KINFECSYPL (96 aa). The 256-residue stretch at 335-590 folds into the ZP domain; it reads ECRPNDIKVS…PTCSGTRFRS (256 aa). N-linked (GlcNAc...) asparagine glycans are attached at residues N397 and N448. A flexible ZP-N/ZP-C linker; important for secretion and polymerization into filaments region spans residues 431–454; the sequence is DMKVSLETSLQPIVSSLNISVGGT. An internal hydrophobic patch (IHP) region spans residues 455-465; sequence GMFTVRMALFQ. The tract at residues 455 to 590 is ZP-C; sequence GMFTVRMALF…PTCSGTRFRS (136 aa). Cystine bridges form between C507/C567, C528/C583, and C572/C579. N514 carries an N-linked (GlcNAc...) asparagine glycan. Residues 587 to 590 are essential for cleavage by HPN; it reads RFRS. The tract at residues 599 to 607 is external hydrophobic patch (EHP); regulates polymerization into filaments; the sequence is VLNLGPITR. The GPI-anchor amidated serine moiety is linked to residue S620. Residues 621–642 constitute a propeptide, removed in mature form; it reads SLGFLKVCLPLLLSATLTLMFQ.

As to quaternary structure, homodimer that then polymerizes into long filaments. The filaments can additionally assemble laterally to form a sheet. The filaments consist of a zigzag-shaped backbone with laterally protruding arms which interact with bacterial adhesin fimH. Two fimH molecules can bind to a single UMOD monomer. N-glycosylated. Post-translationally, proteolytically cleaved at a conserved C-terminal proteolytic cleavage site to generate the secreted form found in urine. This cleavage is catalyzed by HPN. In terms of tissue distribution, detected in kidney and pancreas.

It localises to the apical cell membrane. It is found in the basolateral cell membrane. The protein localises to the cell projection. The protein resides in the cilium membrane. Its subcellular location is the secreted. In terms of biological role, functions in biogenesis and organization of the apical membrane of epithelial cells of the thick ascending limb of Henle's loop (TALH), where it promotes formation of complex filamentous gel-like structure that may play a role in the water barrier permeability. May serve as a receptor for binding and endocytosis of cytokines (IL-1, IL-2) and TNF. Facilitates neutrophil migration across renal epithelia. In the urine, may contribute to colloid osmotic pressure, retards passage of positively charged electrolytes, and inhibits formation of liquid containing supersaturated salts and subsequent formation of salt crystals. Protects against urinary tract infections by binding to type 1 fimbriated E.coli. Binds to bacterial adhesin fimH which mediates the stable formation of bacterial aggregates, prevents the binding of E.coli to uroplakins UPK1A and UPK1B which act as urothelial receptors for type I fimbriae, and allows for pathogen clearance through micturation. Also promotes aggregation of other bacteria including K.pneumoniae, P.aeruginosa and S.mitis and so may also protect against other uropathogens. The sequence is that of Uromodulin (UMOD) from Canis lupus familiaris (Dog).